A 341-amino-acid chain; its full sequence is tRNA N6-adenosine threonylcarbamoyltransferase (341 aa).

Fe cation is bound by residues histidine 115 and histidine 119. Residues 138–142, aspartate 171, glycine 184, aspartate 188, and asparagine 279 each bind substrate; that span reads VVSGG. Residue aspartate 307 coordinates Fe cation.

It belongs to the KAE1 / TsaD family. Fe(2+) serves as cofactor.

The protein localises to the cytoplasm. It catalyses the reaction L-threonylcarbamoyladenylate + adenosine(37) in tRNA = N(6)-L-threonylcarbamoyladenosine(37) in tRNA + AMP + H(+). Required for the formation of a threonylcarbamoyl group on adenosine at position 37 (t(6)A37) in tRNAs that read codons beginning with adenine. Is involved in the transfer of the threonylcarbamoyl moiety of threonylcarbamoyl-AMP (TC-AMP) to the N6 group of A37, together with TsaE and TsaB. TsaD likely plays a direct catalytic role in this reaction. This chain is tRNA N6-adenosine threonylcarbamoyltransferase, found in Clostridium novyi (strain NT).